The following is a 224-amino-acid chain: Germin-like protein 8-10 (224 aa).

The N-terminal stretch at methionine 1–alanine 22 is a signal peptide. Cysteine 32 and cysteine 47 are disulfide-bonded. A Cupin type-1 domain is found at alanine 62 to aspartate 212. N-linked (GlcNAc...) asparagine glycosylation is present at asparagine 76. The Mn(2+) site is built by histidine 109, histidine 111, and glutamate 116. The N-linked (GlcNAc...) asparagine glycan is linked to asparagine 135. Mn(2+) is bound at residue histidine 157.

This sequence belongs to the germin family. Oligomer (believed to be a pentamer but probably hexamer).

The protein localises to the secreted. It localises to the extracellular space. It is found in the apoplast. Functionally, plays a role in broad-spectrum disease resistance. Probably has no oxalate oxidase activity even if the active site is conserved. The sequence is that of Germin-like protein 8-10 (GLP2) from Oryza sativa subsp. japonica (Rice).